The chain runs to 232 residues: MAVDNFLFGQCILYFLAFLFGFIAVVPLSENGDDFQGKCLLFTEGIWQNENMTMGKQRFIVEEWGPESSCRFITFVGIVSLILSAVQAWRTFFFLCKGHDDSLFHSFLNLLLSLLVLFVVFVAGTISSVGFSIWCDSVTENGAMPSSCEDLQDTDLELGVENSSFYDQFAIAQFGLWSAWLCWLGLTVLAFLKVYHNHRQQELLESLVQEKELLLGHPLQRSSYVYNRNAMI.

A helical membrane pass occupies residues 6-26 (FLFGQCILYFLAFLFGFIAVV). The N-linked (GlcNAc...) asparagine glycan is linked to Asn51. A run of 2 helical transmembrane segments spans residues 75–95 (FVGI…FFFL) and 114–134 (LLVL…FSIW). Asn162 carries an N-linked (GlcNAc...) asparagine glycan. Residues 169-189 (FAIAQFGLWSAWLCWLGLTVL) form a helical membrane-spanning segment.

Belongs to the TMEM179 family.

It localises to the membrane. The sequence is that of Transmembrane protein 179 (tmem179) from Danio rerio (Zebrafish).